We begin with the raw amino-acid sequence, 521 residues long: Bifunctional purine biosynthesis protein PurH (521 aa).

Residues Met-1 to Val-145 enclose the MGS-like domain.

The protein belongs to the PurH family.

The enzyme catalyses (6R)-10-formyltetrahydrofolate + 5-amino-1-(5-phospho-beta-D-ribosyl)imidazole-4-carboxamide = 5-formamido-1-(5-phospho-D-ribosyl)imidazole-4-carboxamide + (6S)-5,6,7,8-tetrahydrofolate. The catalysed reaction is IMP + H2O = 5-formamido-1-(5-phospho-D-ribosyl)imidazole-4-carboxamide. The protein operates within purine metabolism; IMP biosynthesis via de novo pathway; 5-formamido-1-(5-phospho-D-ribosyl)imidazole-4-carboxamide from 5-amino-1-(5-phospho-D-ribosyl)imidazole-4-carboxamide (10-formyl THF route): step 1/1. Its pathway is purine metabolism; IMP biosynthesis via de novo pathway; IMP from 5-formamido-1-(5-phospho-D-ribosyl)imidazole-4-carboxamide: step 1/1. The polypeptide is Bifunctional purine biosynthesis protein PurH (Paraburkholderia phytofirmans (strain DSM 17436 / LMG 22146 / PsJN) (Burkholderia phytofirmans)).